The chain runs to 122 residues: Large ribosomal subunit protein uL14 (122 aa).

Belongs to the universal ribosomal protein uL14 family. As to quaternary structure, part of the 50S ribosomal subunit. Forms a cluster with proteins L3 and L19. In the 70S ribosome, L14 and L19 interact and together make contacts with the 16S rRNA in bridges B5 and B8.

In terms of biological role, binds to 23S rRNA. Forms part of two intersubunit bridges in the 70S ribosome. This is Large ribosomal subunit protein uL14 from Neisseria gonorrhoeae (strain ATCC 700825 / FA 1090).